The chain runs to 560 residues: DNA ligase B (560 aa).

Residue lysine 124 is the N6-AMP-lysine intermediate of the active site.

It belongs to the NAD-dependent DNA ligase family. LigB subfamily.

It catalyses the reaction NAD(+) + (deoxyribonucleotide)n-3'-hydroxyl + 5'-phospho-(deoxyribonucleotide)m = (deoxyribonucleotide)n+m + AMP + beta-nicotinamide D-nucleotide.. Functionally, catalyzes the formation of phosphodiester linkages between 5'-phosphoryl and 3'-hydroxyl groups in double-stranded DNA using NAD as a coenzyme and as the energy source for the reaction. The chain is DNA ligase B from Citrobacter koseri (strain ATCC BAA-895 / CDC 4225-83 / SGSC4696).